The following is a 237-amino-acid chain: Sugar fermentation stimulation protein homolog (237 aa).

This sequence belongs to the SfsA family.

This is Sugar fermentation stimulation protein homolog from Synechocystis sp. (strain ATCC 27184 / PCC 6803 / Kazusa).